The primary structure comprises 359 residues: Caffeic acid 3-O-methyltransferase (359 aa).

126-132 (MNQDKVL) provides a ligand contact to substrate. The segment at 158-176 (AFEYHGTDPRFNKVFNRGM) is substrate binding. 5 residues coordinate S-adenosyl-L-methionine: Gly204, Asp227, Asp247, Met248, and Lys261. His265 acts as the Proton acceptor in catalysis.

The protein belongs to the class I-like SAM-binding methyltransferase superfamily. Cation-independent O-methyltransferase family. COMT subfamily. In terms of assembly, homodimer. As to expression, fruit. Not expressed in leaf.

It carries out the reaction (E)-caffeate + S-adenosyl-L-methionine = (E)-ferulate + S-adenosyl-L-homocysteine + H(+). It functions in the pathway aromatic compound metabolism; phenylpropanoid biosynthesis. Its function is as follows. Catalyzes the conversion of caffeic acid to ferulic acid and of 5-hydroxyferulic acid to sinapic acid. The resulting products may subsequently be converted to the corresponding alcohols that are incorporated into lignins. The protein is Caffeic acid 3-O-methyltransferase (COMT) of Capsicum annuum (Capsicum pepper).